The sequence spans 22 residues: Piscidin-3 (22 aa).

Glycine 22 is modified (glycine amide).

The protein belongs to the pleurocidin family. Mast cells in gill, skin and gut, and in lining blood vessels in the viscera.

The protein localises to the secreted. It is found in the membrane. Its function is as follows. Antimicrobial peptide with broad-spectrum activity against Gram-positive and Gram-negative bacteria. Rapidly inactivates both channel catfish herpesvirus (ED(50)=11 uM) and frog virus 3 (ED(50)=16 uM) over a wide temperature range. Has hemolytic activity. In Morone chrysops x Morone saxatilis (White bass x Striped bass), this protein is Piscidin-3.